The primary structure comprises 1054 residues: NACHT, LRR and PYD domains-containing protein 12 (1054 aa).

In terms of domain architecture, Pyrin spans 1–95 (MLPSTARDGL…WERGQGEDLV (95 aa)). One can recognise an FISNA domain in the interval 129–201 (YKDYVRRKFQ…SPIQMETLFE (73 aa)). An NACHT domain is found at 211–528 (HTVVLQGAAG…EFFAAMYCAL (318 aa)). 217-224 (GAAGMGKS) serves as a coordination point for ATP. LRR repeat units lie at residues 821-841 (YLVE…KLLC), 850-871 (RLRT…DLAS), 878-899 (SLLE…LLCE), 907-928 (KLQT…GIAS), 935-955 (CLQE…QLLG), 964-985 (RLQK…DLSS), 992-1013 (TLHE…LLCK), and 1021-1042 (KLRV…RMAA).

This sequence belongs to the NLRP family. In terms of assembly, interacts (via pyrin domain) with ASC. Interacts (via pyrin domain) with FAF1 (via UBA domain). Interacts with MAP3K14; this interaction promotes proteasomal degradation of MAP3K14. Interacts with NOD2; this interaction promotes degradation of NOD2 through the ubiquitin-proteasome pathway. Interacts with HSPA1A and HSPA8. Interacts with HSP90AA1. Interacts with TRIM25; this interaction inhibits RIGI-mediated signaling pathway. As to expression, mainly expressed in dendritic cells (DCs) and neutrophils.

Its subcellular location is the cytoplasm. Functionally, plays an essential role as an potent mitigator of inflammation. Primarily expressed in dendritic cells and macrophages, inhibits both canonical and non-canonical NF-kappa-B and ERK activation pathways. Functions as a negative regulator of NOD2 by targeting it to degradation via the proteasome pathway. In turn, promotes bacterial tolerance. Also inhibits the RIGI-mediated immune signaling against RNA viruses by reducing the E3 ubiquitin ligase TRIM25-mediated 'Lys-63'-linked RIGI activation but enhancing the E3 ubiquitin ligase RNF125-mediated 'Lys-48'-linked RIGI degradation. Also acts as a negative regulator of inflammatory response to mitigate obesity and obesity-associated diseases in adipose tissue. This chain is NACHT, LRR and PYD domains-containing protein 12 (Nlrp12), found in Mus musculus (Mouse).